The sequence spans 662 residues: Probable protein phosphatase 2C 4 (662 aa).

Residue Ser153 is modified to Phosphoserine. The region spanning 249–653 (DVSLENQNLQ…DDVSIVVISL (405 aa)) is the PPM-type phosphatase domain. Mn(2+)-binding residues include Asp286, Gly287, Asp581, and Asp644.

It belongs to the PP2C family. Mg(2+) is required as a cofactor. The cofactor is Mn(2+). Expressed in seedlings, roots, leaves, stems, young inflorescences, flowers and siliques.

The protein localises to the nucleus. It carries out the reaction O-phospho-L-seryl-[protein] + H2O = L-seryl-[protein] + phosphate. The catalysed reaction is O-phospho-L-threonyl-[protein] + H2O = L-threonyl-[protein] + phosphate. In terms of biological role, involved in leaf development regulation. The chain is Probable protein phosphatase 2C 4 (PLL5) from Arabidopsis thaliana (Mouse-ear cress).